Reading from the N-terminus, the 1063-residue chain is Cation efflux system protein CzcA (1063 aa).

10 helical membrane-spanning segments follow: residues 14–29 (WLVL…LGIF), 350–370 (GAVL…AALI), 452–472 (LIFG…LTGV), 487–507 (ALLG…ALFI), 534–554 (LANT…CVAI), 883–903 (VVVP…FNNI), 906–926 (GLLV…ALWI), 937–957 (VGFI…LSFI), 982–1004 (VLMT…GTGA), and 1013–1033 (VVIG…PVLY). Residues 1040–1063 (DEDAEDTREPVTQTHQPDQGRQPA) form a disordered region. The segment covering 1049 to 1063 (PVTQTHQPDQGRQPA) has biased composition (polar residues).

It belongs to the resistance-nodulation-cell division (RND) (TC 2.A.6) family.

It is found in the cell membrane. Its function is as follows. Has a low cation transport activity for cobalt, it is essential for the expression of cobalt, zinc, and cadmium resistance. CzcA and CzcB together would act in zinc efflux nearly as effectively as the complete CZC efflux system (CzcABC). The protein is Cation efflux system protein CzcA (czcA) of Alcaligenes sp. (strain CT14).